The sequence spans 336 residues: Zinc-type alcohol dehydrogenase-like protein SE_1777 (336 aa).

The protein belongs to the zinc-containing alcohol dehydrogenase family. Quinone oxidoreductase subfamily.

The sequence is that of Zinc-type alcohol dehydrogenase-like protein SE_1777 from Staphylococcus epidermidis (strain ATCC 12228 / FDA PCI 1200).